Here is a 387-residue protein sequence, read N- to C-terminus: Dual-specificity RNA methyltransferase RlmN (387 aa).

E93 acts as the Proton acceptor in catalysis. A Radical SAM core domain is found at 99 to 343 (EENRGTLCIS…TTVRKTRGDD (245 aa)). A disulfide bridge connects residues C106 and C348. 3 residues coordinate [4Fe-4S] cluster: C113, C117, and C120. S-adenosyl-L-methionine contacts are provided by residues 172 to 173 (GE), S204, 226 to 228 (SLH), and N305. C348 functions as the S-methylcysteine intermediate in the catalytic mechanism.

The protein belongs to the radical SAM superfamily. RlmN family. Requires [4Fe-4S] cluster as cofactor.

The protein localises to the cytoplasm. The catalysed reaction is adenosine(2503) in 23S rRNA + 2 reduced [2Fe-2S]-[ferredoxin] + 2 S-adenosyl-L-methionine = 2-methyladenosine(2503) in 23S rRNA + 5'-deoxyadenosine + L-methionine + 2 oxidized [2Fe-2S]-[ferredoxin] + S-adenosyl-L-homocysteine. The enzyme catalyses adenosine(37) in tRNA + 2 reduced [2Fe-2S]-[ferredoxin] + 2 S-adenosyl-L-methionine = 2-methyladenosine(37) in tRNA + 5'-deoxyadenosine + L-methionine + 2 oxidized [2Fe-2S]-[ferredoxin] + S-adenosyl-L-homocysteine. Its function is as follows. Specifically methylates position 2 of adenine 2503 in 23S rRNA and position 2 of adenine 37 in tRNAs. m2A2503 modification seems to play a crucial role in the proofreading step occurring at the peptidyl transferase center and thus would serve to optimize ribosomal fidelity. This chain is Dual-specificity RNA methyltransferase RlmN, found in Janthinobacterium sp. (strain Marseille) (Minibacterium massiliensis).